We begin with the raw amino-acid sequence, 246 residues long: Uroporphyrinogen-III synthase (246 aa).

The protein belongs to the uroporphyrinogen-III synthase family. In terms of assembly, monomer.

The catalysed reaction is hydroxymethylbilane = uroporphyrinogen III + H2O. It participates in porphyrin-containing compound metabolism; protoporphyrin-IX biosynthesis; coproporphyrinogen-III from 5-aminolevulinate: step 3/4. Catalyzes cyclization of the linear tetrapyrrole, hydroxymethylbilane, to the macrocyclic uroporphyrinogen III. The sequence is that of Uroporphyrinogen-III synthase (hemD) from Escherichia coli (strain K12).